Consider the following 268-residue polypeptide: Glutamate racemase (268 aa).

Residues 10–11 and 42–43 each bind substrate; these read DS and YG. The Proton donor/acceptor role is filled by Cys-73. 74–75 contacts substrate; that stretch reads NT. The active-site Proton donor/acceptor is Cys-184. 185–186 contributes to the substrate binding site; that stretch reads TH.

Belongs to the aspartate/glutamate racemases family.

It carries out the reaction L-glutamate = D-glutamate. It participates in cell wall biogenesis; peptidoglycan biosynthesis. In terms of biological role, provides the (R)-glutamate required for cell wall biosynthesis. In Limosilactobacillus fermentum (strain NBRC 3956 / LMG 18251) (Lactobacillus fermentum), this protein is Glutamate racemase.